Reading from the N-terminus, the 440-residue chain is UDP-N-acetylglucosamine 1-carboxyvinyltransferase (440 aa).

A phosphoenolpyruvate-binding site is contributed by 22–23 (KN). R102 is a binding site for UDP-N-acetyl-alpha-D-glucosamine. The active-site Proton donor is C126. C126 is subject to 2-(S-cysteinyl)pyruvic acid O-phosphothioketal. UDP-N-acetyl-alpha-D-glucosamine contacts are provided by residues 131 to 135 (RPVDQ), D320, and I342.

This sequence belongs to the EPSP synthase family. MurA subfamily.

The protein localises to the cytoplasm. The catalysed reaction is phosphoenolpyruvate + UDP-N-acetyl-alpha-D-glucosamine = UDP-N-acetyl-3-O-(1-carboxyvinyl)-alpha-D-glucosamine + phosphate. It participates in cell wall biogenesis; peptidoglycan biosynthesis. Its function is as follows. Cell wall formation. Adds enolpyruvyl to UDP-N-acetylglucosamine. The protein is UDP-N-acetylglucosamine 1-carboxyvinyltransferase of Acidovorax ebreus (strain TPSY) (Diaphorobacter sp. (strain TPSY)).